The following is a 992-amino-acid chain: Disks large-associated protein 4 (992 aa).

A compositionally biased stretch (basic and acidic residues) spans 1-20 (MKGLGDSRPRHLSDSLDPPH). Disordered stretches follow at residues 1–30 (MKGL…TDRN), 47–66 (PGQN…QLPP), and 157–206 (LEGT…GWWS). A compositionally biased stretch (gly residues) spans 162 to 171 (GKVGGNGSKK). The span at 172–194 (GGMEDGKGRRAKSKERAKAGEPK) shows a compositional bias: basic and acidic residues. Phosphoserine occurs at positions 206 and 207. Arg291 is subject to Omega-N-methylarginine. A disordered region spans residues 342 to 396 (STTLLSPRETDAAAEGPIPCRRMRSGSYIKAMGDEDSDESGGSPKPSPKTAARRQ). 6 positions are modified to phosphoserine: Ser378, Ser381, Ser388, Ser405, Ser415, and Ser421. Disordered stretches follow at residues 527-751 (SVSL…GPRQ), 763-798 (SYGD…AQPG), and 915-992 (TPEK…QTRL). A compositionally biased stretch (low complexity) spans 528–554 (VSLQSLSPPPSTGSLSNSRTLPSSSCL). The segment covering 576–591 (VTVQSSTESAQDTYLD) has biased composition (polar residues). A phosphoserine mark is found at Ser580, Ser581, Ser609, Ser611, Ser665, and Ser744. The segment covering 600 to 620 (TSQSGLSNSSDSLDSSTRPPS) has biased composition (low complexity). Residue Thr915 is modified to Phosphothreonine. Composition is skewed to basic and acidic residues over residues 915 to 925 (TPEKRKEEKKP) and 940 to 958 (VSRD…EARK). Over residues 969-978 (VRQNSATESA) the composition is skewed to polar residues. The residue at position 973 (Ser973) is a Phosphoserine.

Belongs to the SAPAP family. Interacts with DLG1 and DLG4/PSD-95.

The protein resides in the membrane. In terms of biological role, may play a role in the molecular organization of synapses and neuronal cell signaling. Could be an adapter protein linking ion channel to the subsynaptic cytoskeleton. May induce enrichment of PSD-95/SAP90 at the plasma membrane. In Homo sapiens (Human), this protein is Disks large-associated protein 4 (DLGAP4).